Consider the following 650-residue polypeptide: Acetyl-coenzyme A synthetase (650 aa).

Residues 191-194 (RGGR), T311, and N335 contribute to the CoA site. ATP contacts are provided by residues 387–389 (GEP), 411–416 (DTWWQT), D501, and R516. Residue S524 participates in CoA binding. R527 contacts ATP. Mg(2+) contacts are provided by V538, H540, and I543. A CoA-binding site is contributed by R585. K610 is subject to N6-acetyllysine.

The protein belongs to the ATP-dependent AMP-binding enzyme family. The cofactor is Mg(2+). In terms of processing, acetylated. Deacetylation by the SIR2-homolog deacetylase activates the enzyme.

It carries out the reaction acetate + ATP + CoA = acetyl-CoA + AMP + diphosphate. Functionally, catalyzes the conversion of acetate into acetyl-CoA (AcCoA), an essential intermediate at the junction of anabolic and catabolic pathways. AcsA undergoes a two-step reaction. In the first half reaction, AcsA combines acetate with ATP to form acetyl-adenylate (AcAMP) intermediate. In the second half reaction, it can then transfer the acetyl group from AcAMP to the sulfhydryl group of CoA, forming the product AcCoA. This chain is Acetyl-coenzyme A synthetase, found in Vibrio vulnificus (strain CMCP6).